The chain runs to 76 residues: Acyl carrier protein (76 aa).

The Carrier domain occupies Met1–Leu75. Ser35 carries the post-translational modification O-(pantetheine 4'-phosphoryl)serine.

This sequence belongs to the acyl carrier protein (ACP) family. 4'-phosphopantetheine is transferred from CoA to a specific serine of apo-ACP by AcpS. This modification is essential for activity because fatty acids are bound in thioester linkage to the sulfhydryl of the prosthetic group.

The protein localises to the cytoplasm. Its pathway is lipid metabolism; fatty acid biosynthesis. Its function is as follows. Carrier of the growing fatty acid chain in fatty acid biosynthesis. This chain is Acyl carrier protein, found in Phytoplasma australiense.